We begin with the raw amino-acid sequence, 373 residues long: 3-dehydroquinate synthase (373 aa).

Residues 67–72, 101–105, 125–126, K138, and K147 each bind NAD(+); these read EGEQAK, GVVLD, and TT. The Zn(2+) site is built by E180, H240, and H256.

It belongs to the sugar phosphate cyclases superfamily. Dehydroquinate synthase family. NAD(+) is required as a cofactor. It depends on Co(2+) as a cofactor. Zn(2+) serves as cofactor.

It localises to the cytoplasm. The catalysed reaction is 7-phospho-2-dehydro-3-deoxy-D-arabino-heptonate = 3-dehydroquinate + phosphate. It functions in the pathway metabolic intermediate biosynthesis; chorismate biosynthesis; chorismate from D-erythrose 4-phosphate and phosphoenolpyruvate: step 2/7. Catalyzes the conversion of 3-deoxy-D-arabino-heptulosonate 7-phosphate (DAHP) to dehydroquinate (DHQ). This Chlamydia muridarum (strain MoPn / Nigg) protein is 3-dehydroquinate synthase (aroB).